The sequence spans 211 residues: Abscisic acid receptor PYL7 (211 aa).

Residues 29 to 180 (HHCRENQCTS…NLKSLACVSE (152 aa)) form an START-like region. Cystine bridges form between cysteine 31/cysteine 161 and cysteine 36/cysteine 161. Residues lysine 65, 93-98 (ATTSTE), 120-126 (RLKNYSS), and glutamate 145 each bind abscisate. The Gate loop signature appears at 89–93 (SGLPA). Positions 119-121 (HRL) match the Latch loop motif.

Belongs to the PYR/PYL/RCAR abscisic acid intracellular receptor family. In terms of assembly, homodimer. Binds ABA on one subunit only. Binds to CARs protein in an ABA-independent manner, both at the plasma membrane and in the nucleus. Interacts with ABI1, and possibly with other PP2Cs.

It localises to the cytoplasm. Its subcellular location is the nucleus. It is found in the cell membrane. Its function is as follows. Receptor for abscisic acid (ABA) required for ABA-mediated responses such as stomatal closure and germination inhibition. Inhibits the activity of group-A protein phosphatases type 2C (PP2Cs) when activated by ABA. This is Abscisic acid receptor PYL7 (PYL7) from Arabidopsis thaliana (Mouse-ear cress).